The chain runs to 160 residues: Salivary gland broad-spectrum antiviral protein (160 aa).

Residues Val17–Leu37 form a helical membrane-spanning segment. N-linked (GlcNAc...) asparagine glycosylation is found at Asn62 and Asn145.

As to expression, salivary gland (at protein level).

It localises to the membrane. Functionally, (Microbial infection) Modulates replication of Zika virus in salivary glands. Its function is as follows. (Microbial infection) Modulates replication of dengue virus type 2 in salivary glands. In terms of biological role, (Microbial infection) Modulates replication of chikungunya virus in salivary glands. The protein is Salivary gland broad-spectrum antiviral protein of Aedes aegypti (Yellowfever mosquito).